The following is a 229-amino-acid chain: Cytidylate kinase (229 aa).

ATP is bound at residue 12–20 (GPSGAGKGT).

It belongs to the cytidylate kinase family. Type 1 subfamily.

It localises to the cytoplasm. It carries out the reaction CMP + ATP = CDP + ADP. The catalysed reaction is dCMP + ATP = dCDP + ADP. The polypeptide is Cytidylate kinase (Serratia proteamaculans (strain 568)).